Consider the following 807-residue polypeptide: Lysyl oxidase homolog 3B (807 aa).

An N-terminal signal peptide occupies residues 1 to 24 (MELHQWCRHIIVFLLNVWIPSCFA). SRCR domains are found at residues 49–150 (FRLS…VICK), 175–288 (VRLR…VSCV), 309–409 (TRLK…VRCN), 419–470 (VRIL…LGYA), and 476–579 (VRLS…VICS). 9 cysteine pairs are disulfide-bonded: cysteine 75–cysteine 139, cysteine 88–cysteine 149, cysteine 119–cysteine 129, cysteine 207–cysteine 277, cysteine 220–cysteine 287, cysteine 254–cysteine 264, cysteine 334–cysteine 398, cysteine 347–cysteine 408, and cysteine 378–cysteine 388. N-linked (GlcNAc...) asparagine glycosylation is present at asparagine 272. Asparagine 392 is a glycosylation site (N-linked (GlcNAc...) asparagine). 2 disulfides stabilise this stretch: cysteine 514/cysteine 578 and cysteine 547/cysteine 557. N-linked (GlcNAc...) asparagine glycosylation occurs at asparagine 536. N-linked (GlcNAc...) asparagine glycosylation occurs at asparagine 679. Positions 688–724 (KASFCLEDTDCDEGVSKRYKCANFGEQGITVGCWDLY) form a cross-link, lysine tyrosylquinone (Lys-Tyr). 2',4',5'-topaquinone is present on tyrosine 724.

This sequence belongs to the lysyl oxidase family. The cofactor is Cu cation. It depends on lysine tyrosylquinone residue as a cofactor. In terms of processing, the lysine tyrosylquinone cross-link (LTQ) is generated by condensation of the epsilon-amino group of a lysine with a topaquinone produced by oxidation of tyrosine.

Its subcellular location is the secreted. The protein resides in the extracellular space. The protein localises to the cytoplasm. It localises to the nucleus. It carries out the reaction L-lysyl-[protein] + O2 + H2O = (S)-2-amino-6-oxohexanoyl-[protein] + H2O2 + NH4(+). It catalyses the reaction N(6)-acetyl-L-lysyl-[protein] + O2 + H2O = acetamide + (S)-2-amino-6-oxohexanoyl-[protein] + H2O2. In terms of biological role, protein-lysine 6-oxidase that mediates the oxidation of peptidyl lysine residues to allysine in target proteins. Catalyzes the post-translational oxidative deamination of peptidyl lysine residues in precursors of elastin and different types of collagens, a prerequisite in the formation of cross-links between collagens and elastin. Can mediate oxidation of lysine residues that are acetylated. Also able to catalyze deacetylation of lysine residues. Required for maturation of neural crest derived cartilage elements. The protein is Lysyl oxidase homolog 3B of Danio rerio (Zebrafish).